The chain runs to 221 residues: Endonuclease V (221 aa).

Asp-44 and Asp-112 together coordinate Mg(2+).

This sequence belongs to the endonuclease V family. The cofactor is Mg(2+).

It is found in the cytoplasm. The catalysed reaction is Endonucleolytic cleavage at apurinic or apyrimidinic sites to products with a 5'-phosphate.. Its function is as follows. DNA repair enzyme involved in the repair of deaminated bases. Selectively cleaves double-stranded DNA at the second phosphodiester bond 3' to a deoxyinosine leaving behind the intact lesion on the nicked DNA. This chain is Endonuclease V, found in Nostoc punctiforme (strain ATCC 29133 / PCC 73102).